We begin with the raw amino-acid sequence, 490 residues long: Chromosomal replication initiator protein DnaA (490 aa).

The interval 1–91 (MTMKGGVASQ…GELWAAHDAT (91 aa)) is domain I, interacts with DnaA modulators. The domain II stretch occupies residues 91-147 (TGRRIDLKSRLEFEAAAGAYVEATPKAVAAEPIEIVLPVSTDAPTVVAPSAKSPRTQ). Residues 148 to 370 (GLQERFTFET…GALNTLSARA (223 aa)) are domain III, AAA+ region. ATP contacts are provided by Gly192, Gly194, Lys195, and Thr196. A domain IV, binds dsDNA region spans residues 371–490 (GEGLSRMTLD…LETLTRKLRG (120 aa)).

It belongs to the DnaA family. Oligomerizes as a right-handed, spiral filament on DNA at oriC.

It localises to the cytoplasm. Functionally, plays an essential role in the initiation and regulation of chromosomal replication. ATP-DnaA binds to the origin of replication (oriC) to initiate formation of the DNA replication initiation complex once per cell cycle. Binds the DnaA box (a 9 base pair repeat at the origin) and separates the double-stranded (ds)DNA. Forms a right-handed helical filament on oriC DNA; dsDNA binds to the exterior of the filament while single-stranded (ss)DNA is stabiized in the filament's interior. The ATP-DnaA-oriC complex binds and stabilizes one strand of the AT-rich DNA unwinding element (DUE), permitting loading of DNA polymerase. After initiation quickly degrades to an ADP-DnaA complex that is not apt for DNA replication. Binds acidic phospholipids. This chain is Chromosomal replication initiator protein DnaA, found in Caulobacter vibrioides (strain ATCC 19089 / CIP 103742 / CB 15) (Caulobacter crescentus).